The following is a 142-amino-acid chain: Hemoglobin subunit alpha-1 (142 aa).

Ser1 bears the N-acetylserine mark. Positions Ser1 to Arg142 constitute a Globin domain. His59 lines the O2 pocket. His88 lines the heme b pocket.

Belongs to the globin family. Hb1 is a heterotetramer of two alpha-2 chains and two beta chains, while Hb2 is a heterotetramer of two alpha-2 chains and two beta chains. In terms of tissue distribution, red blood cells.

Functionally, involved in oxygen transport from gills to the various peripheral tissues. The polypeptide is Hemoglobin subunit alpha-1 (hba1) (Notothenia angustata (Rockcod)).